An 86-amino-acid chain; its full sequence is Small ribosomal subunit protein bS18 (86 aa).

It belongs to the bacterial ribosomal protein bS18 family. Part of the 30S ribosomal subunit. Forms a tight heterodimer with protein bS6.

Functionally, binds as a heterodimer with protein bS6 to the central domain of the 16S rRNA, where it helps stabilize the platform of the 30S subunit. This Campylobacter jejuni subsp. jejuni serotype O:6 (strain 81116 / NCTC 11828) protein is Small ribosomal subunit protein bS18.